Reading from the N-terminus, the 543-residue chain is Cytochrome P450 307a1 (543 aa).

Serine 219 bears the Phosphoserine mark. The disordered stretch occupies residues 440 to 460; the sequence is FLEPSKEQSPKNSKGSDSGIE. Residues 449–460 are compositionally biased toward polar residues; it reads PKNSKGSDSGIE. Cysteine 485 is a heme binding site.

Belongs to the cytochrome P450 family. The cofactor is heme.

It localises to the endoplasmic reticulum membrane. Its subcellular location is the microsome membrane. Required for correct development of the embryonic midline glial cells which are necessary for the formation of distinct segmental commissures. The sequence is that of Cytochrome P450 307a1 (spo) from Drosophila melanogaster (Fruit fly).